Consider the following 105-residue polypeptide: Prokineticin-1 (105 aa).

A signal peptide spans 1–19 (MRGAVHIFIMLLLATASDC). 5 cysteine pairs are disulfide-bonded: C26-C38, C32-C50, C37-C78, C60-C86, and C80-C96.

This sequence belongs to the AVIT (prokineticin) family. In terms of tissue distribution, highly expressed in liver and ovary and weakly expressed in testis and placenta. Expressed in mucosa and mesenchyme of embryonic gut during enteric nervous system development (at protein level). Predominantly expressed in kidney and liver. Also expressed in lung, ovary, placenta and testis. In fetal liver, is restricted to and highly expressed in hepatocytes. In adult kidney, expression is restricted to the endothelial tubule cells. In placenta, expressed throughout gestation.

It localises to the secreted. Its function is as follows. Potently contracts gastrointestinal (GI) smooth muscle. Induces proliferation, migration and fenestration (the formation of membrane discontinuities) in capillary endothelial cells. Induces proliferation and differentiation, but not migration, of enteric neural crest cells. Directly influences neuroblastoma progression by promoting the proliferation and migration of neuroblastoma cells. Positively regulates PTGS2 expression and prostaglandin synthesis. May play a role in placentation. May play a role in normal and pathological testis angiogenesis. This Mus musculus (Mouse) protein is Prokineticin-1.